The following is a 118-amino-acid chain: Protein BEX4 (118 aa).

Residues V14–R50 are disordered. The span at K28–K44 shows a compositional bias: basic and acidic residues. Residues S30–V88 form an interaction with SIRT2 region. Positions S30–P118 are interaction with alpha-tubulin. Zn(2+) is bound at residue C115.

This sequence belongs to the BEX family. As to quaternary structure, interacts with alpha-tubulin. Interacts with SIRT2. Ubiquitinated and degraded by the proteasome. As to expression, expressed in both Sertoli and germ cells as well as interstitial area of the testis (at protein level).

The protein localises to the cytoplasm. Its subcellular location is the cytoskeleton. The protein resides in the spindle pole. It is found in the nucleus. May play a role in microtubule deacetylation by negatively regulating the SIRT2 deacetylase activity toward alpha-tubulin and thereby participate in the control of cell cycle progression and genomic stability. In absence of reductive stress, acts as a pseudosubstrate for the CRL2(FEM1B) complex: associates with FEM1B via zinc, thereby preventing association between FEM1B and its substrates. This chain is Protein BEX4, found in Mus musculus (Mouse).